The following is a 295-amino-acid chain: Polyadenylate-binding protein 2-B (295 aa).

The disordered stretch occupies residues M1–Q102. Gly residues-rich tracts occupy residues L19–D31 and G71–G81. Acidic residues predominate over residues E83–G96. Positions D106–S140 form a coiled coil. A necessary for homooligomerization region spans residues N145–Y295. The RRM domain maps to R162 to T239.

Monomer and homooligomer. Binds RNA as a monomer and oligomerizes when bound to poly(A).

It localises to the nucleus. The protein localises to the cytoplasm. Functionally, involved in the 3'-end formation of mRNA precursors (pre-mRNA) by the addition of a poly(A) tail of 200-250 nt to the upstream cleavage product. Stimulates poly(A) polymerase (PAPOLA) conferring processivity on the poly(A) tail elongation reaction and also controls the poly(A) tail length. Increases the affinity of poly(A) polymerase for RNA. Binds to poly(A) and to poly(G) with high affinity. May protect the poly(A) tail from degradation. The protein is Polyadenylate-binding protein 2-B (pabpn1-b) of Xenopus laevis (African clawed frog).